The chain runs to 605 residues: Alanine--tRNA ligase (605 aa).

Positions 463, 467, 565, and 569 each coordinate Zn(2+).

Belongs to the class-II aminoacyl-tRNA synthetase family. Requires Zn(2+) as cofactor.

The protein resides in the cytoplasm. It catalyses the reaction tRNA(Ala) + L-alanine + ATP = L-alanyl-tRNA(Ala) + AMP + diphosphate. Its function is as follows. Catalyzes the attachment of alanine to tRNA(Ala) in a two-step reaction: alanine is first activated by ATP to form Ala-AMP and then transferred to the acceptor end of tRNA(Ala). Also edits incorrectly charged Ser-tRNA(Ala) and Gly-tRNA(Ala) via its editing domain. This Treponema pallidum (strain Nichols) protein is Alanine--tRNA ligase (alaS).